Reading from the N-terminus, the 496-residue chain is ATP synthase subunit beta, chloroplastic (496 aa).

An ATP-binding site is contributed by 170–177; sequence GGAGVGKT.

This sequence belongs to the ATPase alpha/beta chains family. F-type ATPases have 2 components, CF(1) - the catalytic core - and CF(0) - the membrane proton channel. CF(1) has five subunits: alpha(3), beta(3), gamma(1), delta(1), epsilon(1). CF(0) has four main subunits: a(1), b(1), b'(1) and c(9-12).

Its subcellular location is the plastid. It localises to the chloroplast thylakoid membrane. The enzyme catalyses ATP + H2O + 4 H(+)(in) = ADP + phosphate + 5 H(+)(out). Functionally, produces ATP from ADP in the presence of a proton gradient across the membrane. The catalytic sites are hosted primarily by the beta subunits. The sequence is that of ATP synthase subunit beta, chloroplastic from Trachycarpus fortunei (Chinese windmill palm).